A 405-amino-acid polypeptide reads, in one-letter code: Formate-dependent phosphoribosylglycinamide formyltransferase (405 aa).

N(1)-(5-phospho-beta-D-ribosyl)glycinamide contacts are provided by residues 27–28 (EL) and Glu-87. ATP contacts are provided by residues Arg-120, Lys-162, 167 to 172 (SSGKGQ), 202 to 205 (EGFI), and Glu-210. The 196-residue stretch at 125 to 320 (RLAAETLGLP…EFELHARALL (196 aa)) folds into the ATP-grasp domain. Residues Glu-279 and Glu-291 each contribute to the Mg(2+) site. Residues Asp-298, Lys-367, and 374 to 375 (RR) each bind N(1)-(5-phospho-beta-D-ribosyl)glycinamide.

Belongs to the PurK/PurT family. As to quaternary structure, homodimer.

It catalyses the reaction N(1)-(5-phospho-beta-D-ribosyl)glycinamide + formate + ATP = N(2)-formyl-N(1)-(5-phospho-beta-D-ribosyl)glycinamide + ADP + phosphate + H(+). It functions in the pathway purine metabolism; IMP biosynthesis via de novo pathway; N(2)-formyl-N(1)-(5-phospho-D-ribosyl)glycinamide from N(1)-(5-phospho-D-ribosyl)glycinamide (formate route): step 1/1. Functionally, involved in the de novo purine biosynthesis. Catalyzes the transfer of formate to 5-phospho-ribosyl-glycinamide (GAR), producing 5-phospho-ribosyl-N-formylglycinamide (FGAR). Formate is provided by PurU via hydrolysis of 10-formyl-tetrahydrofolate. This chain is Formate-dependent phosphoribosylglycinamide formyltransferase, found in Bordetella avium (strain 197N).